Here is a 163-residue protein sequence, read N- to C-terminus: Transmembrane protein 278 (163 aa).

The disordered stretch occupies residues 1 to 37 (MSEQGRETEEEEGGGGASDTAPMLPRGPPDHQASALT). Transmembrane regions (helical) follow at residues 51 to 71 (LLAG…LVLL) and 105 to 125 (AALI…ASAV). Over residues 136–148 (LLPPPAGTPGPRR) the composition is skewed to pro residues. The interval 136-156 (LLPPPAGTPGPRRPPGRPDED) is disordered.

This sequence belongs to the TMEM88 family.

The protein resides in the membrane. This chain is Transmembrane protein 278, found in Homo sapiens (Human).